We begin with the raw amino-acid sequence, 855 residues long: Suppressor of tumorigenicity 14 protein homolog (855 aa).

The Cytoplasmic portion of the chain corresponds to 1–55 (MGSNRGRKAGGGSQDFGAGLKYNSRLENMNGFEEGVEFLPANNAKKVEKRGPRRW). S13 is modified (phosphoserine). Residues 56 to 76 (VVLVAVLFSFLLLSLMAGLLV) traverse the membrane as a helical; Signal-anchor for type II membrane protein segment. Topologically, residues 77–855 (WHFHYRNVRV…RDWIKEHTGV (779 aa)) are extracellular. The region spanning 86-203 (VQKVFNGHLR…TSVVAFPIDP (118 aa)) is the SEA domain. N-linked (GlcNAc...) asparagine glycosylation occurs at N107. C214 and C244 are joined by a disulfide. 2 CUB domains span residues 214–331 (CSFA…EATF) and 340–444 (CGGF…LAEY). Residues N302 and N365 are each glycosylated (N-linked (GlcNAc...) asparagine). 2 disulfides stabilise this stretch: C340-C366 and C397-C410. Residue N421 is glycosylated (N-linked (GlcNAc...) asparagine). 4 consecutive LDL-receptor class A domains span residues 451–488 (DPCP…YCRC), 489–522 (NATH…DEEG), 523–561 (CSCP…SCDS), and 565–604 (VSCT…NCDC). 13 disulfides stabilise this stretch: C453/C464, C459/C477, C471/C486, C488/C501, C496/C514, C508/C523, C525/C537, C532/C550, C544/C559, C567/C579, C574/C593, C587/C602, and C641/C657. Residue N489 is glycosylated (N-linked (GlcNAc...) asparagine). The Peptidase S1 domain occupies 615–854 (VVGGTNADEG…VRDWIKEHTG (240 aa)). Catalysis depends on charge relay system residues H656 and D711. N772 is a glycosylation site (N-linked (GlcNAc...) asparagine). 2 disulfides stabilise this stretch: C776/C790 and C801/C830. S805 (charge relay system) is an active-site residue.

Belongs to the peptidase S1 family. Interacts with CDCP1. May interact with TMEFF1. In terms of tissue distribution, highly expressed in intestine, kidney, lung, and thymus. Not expressed in skeletal muscle, liver, heart, testis and brain.

Its subcellular location is the membrane. It catalyses the reaction Cleaves various synthetic substrates with Arg or Lys at the P1 position and prefers small side-chain amino acids, such as Ala and Gly, at the P2 position.. In terms of biological role, exhibits trypsin-like activity as defined by cleavage of synthetic substrates with Arg or Lys as the P1 site. Involved in the terminal differentiation of keratinocytes through prostasin (PRSS8) activation and filaggrin (FLG) processing. Proteolytically cleaves and therefore activates TMPRSS13. In Mus musculus (Mouse), this protein is Suppressor of tumorigenicity 14 protein homolog (St14).